The following is a 32-amino-acid chain: ilv operon leader peptide (32 aa).

The polypeptide is ilv operon leader peptide (ilvL) (Yersinia pestis).